The chain runs to 419 residues: UDP-N-acetylglucosamine 1-carboxyvinyltransferase 2 (419 aa).

24 to 25 serves as a coordination point for phosphoenolpyruvate; that stretch reads KN. Arg-94 provides a ligand contact to UDP-N-acetyl-alpha-D-glucosamine. The active-site Proton donor is the Cys-118. Position 118 is a 2-(S-cysteinyl)pyruvic acid O-phosphothioketal (Cys-118). Residues 123-127, Asp-307, and Ile-329 contribute to the UDP-N-acetyl-alpha-D-glucosamine site; that span reads RPIDQ.

Belongs to the EPSP synthase family. MurA subfamily.

It is found in the cytoplasm. It catalyses the reaction phosphoenolpyruvate + UDP-N-acetyl-alpha-D-glucosamine = UDP-N-acetyl-3-O-(1-carboxyvinyl)-alpha-D-glucosamine + phosphate. The protein operates within cell wall biogenesis; peptidoglycan biosynthesis. Its function is as follows. Cell wall formation. Adds enolpyruvyl to UDP-N-acetylglucosamine. In Staphylococcus aureus (strain MRSA252), this protein is UDP-N-acetylglucosamine 1-carboxyvinyltransferase 2.